Here is a 160-residue protein sequence, read N- to C-terminus: Large ribosomal subunit protein uL22c (160 aa).

It belongs to the universal ribosomal protein uL22 family. Part of the 50S ribosomal subunit.

It is found in the plastid. The protein localises to the chloroplast. Functionally, this protein binds specifically to 23S rRNA. The globular domain of the protein is located near the polypeptide exit tunnel on the outside of the subunit, while an extended beta-hairpin is found that lines the wall of the exit tunnel in the center of the 70S ribosome. The protein is Large ribosomal subunit protein uL22c (rpl22) of Lepidium virginicum (Virginia pepperweed).